The following is a 293-amino-acid chain: Pyridoxal 5'-phosphate synthase subunit PdxS (293 aa).

D23 is a binding site for D-ribose 5-phosphate. The active-site Schiff-base intermediate with D-ribose 5-phosphate is K80. G152 serves as a coordination point for D-ribose 5-phosphate. R164 serves as a coordination point for D-glyceraldehyde 3-phosphate. D-ribose 5-phosphate contacts are provided by residues G213 and 234–235 (GS).

Belongs to the PdxS/SNZ family. In terms of assembly, in the presence of PdxT, forms a dodecamer of heterodimers.

The catalysed reaction is aldehydo-D-ribose 5-phosphate + D-glyceraldehyde 3-phosphate + L-glutamine = pyridoxal 5'-phosphate + L-glutamate + phosphate + 3 H2O + H(+). Its pathway is cofactor biosynthesis; pyridoxal 5'-phosphate biosynthesis. Catalyzes the formation of pyridoxal 5'-phosphate from ribose 5-phosphate (RBP), glyceraldehyde 3-phosphate (G3P) and ammonia. The ammonia is provided by the PdxT subunit. Can also use ribulose 5-phosphate and dihydroxyacetone phosphate as substrates, resulting from enzyme-catalyzed isomerization of RBP and G3P, respectively. This Methanothermobacter thermautotrophicus (strain ATCC 29096 / DSM 1053 / JCM 10044 / NBRC 100330 / Delta H) (Methanobacterium thermoautotrophicum) protein is Pyridoxal 5'-phosphate synthase subunit PdxS.